We begin with the raw amino-acid sequence, 321 residues long: Small ribosomal subunit biogenesis GTPase RsgA (321 aa).

The 160-residue stretch at 89 to 248 (QSWINRPPVA…VADTPGFNRP (160 aa)) folds into the CP-type G domain. GTP-binding positions include 138–141 (TKRD) and 190–198 (GPSGVGKTS). Positions 273, 278, 280, and 286 each coordinate Zn(2+).

This sequence belongs to the TRAFAC class YlqF/YawG GTPase family. RsgA subfamily. In terms of assembly, monomer. Associates with 30S ribosomal subunit, binds 16S rRNA. Requires Zn(2+) as cofactor.

It is found in the cytoplasm. Its function is as follows. One of several proteins that assist in the late maturation steps of the functional core of the 30S ribosomal subunit. Helps release RbfA from mature subunits. May play a role in the assembly of ribosomal proteins into the subunit. Circularly permuted GTPase that catalyzes slow GTP hydrolysis, GTPase activity is stimulated by the 30S ribosomal subunit. In Prochlorococcus marinus (strain MIT 9303), this protein is Small ribosomal subunit biogenesis GTPase RsgA.